The following is a 77-amino-acid chain: MFVKTGDKVKVIAGKDKGKEGTVLSVNVKKNRVVVKGVNKIKKHQKPSQTNANGGVVESEGSIHASNVKVISKKEDK.

The interval 42–61 (KKHQKPSQTNANGGVVESEG) is disordered.

This sequence belongs to the universal ribosomal protein uL24 family. Part of the 50S ribosomal subunit.

One of two assembly initiator proteins, it binds directly to the 5'-end of the 23S rRNA, where it nucleates assembly of the 50S subunit. In terms of biological role, one of the proteins that surrounds the polypeptide exit tunnel on the outside of the subunit. This Lactobacillus acidophilus (strain ATCC 700396 / NCK56 / N2 / NCFM) protein is Large ribosomal subunit protein uL24.